The chain runs to 98 residues: MNAKILVIKVGQVETLTFSDGSQYESAIRKKVVPSVKIHSLGAEGNDVGLKKHHGGVDKALFFMSADSFNELNALLNKDFSLYGYCDIRRKFCRVRLE.

Residues 30–98 (KKVVPSVKIH…RRKFCRVRLE (69 aa)) form the MOSC domain.

This is an uncharacterized protein from Haemophilus influenzae (strain ATCC 51907 / DSM 11121 / KW20 / Rd).